The following is a 335-amino-acid chain: Geranylgeranyl pyrophosphate synthase BTS1 (335 aa).

K36, R39, and H68 together coordinate isopentenyl diphosphate. Residues D75 and D79 each coordinate Mg(2+). Residue R84 participates in dimethylallyl diphosphate binding. R85 lines the isopentenyl diphosphate pocket. Dimethylallyl diphosphate contacts are provided by K169, T170, Q206, N213, K223, and K233.

Belongs to the FPP/GGPP synthase family. Mg(2+) serves as cofactor.

It localises to the cytoplasm. It carries out the reaction isopentenyl diphosphate + dimethylallyl diphosphate = (2E)-geranyl diphosphate + diphosphate. The enzyme catalyses isopentenyl diphosphate + (2E)-geranyl diphosphate = (2E,6E)-farnesyl diphosphate + diphosphate. It catalyses the reaction isopentenyl diphosphate + (2E,6E)-farnesyl diphosphate = (2E,6E,10E)-geranylgeranyl diphosphate + diphosphate. It functions in the pathway isoprenoid biosynthesis; farnesyl diphosphate biosynthesis; farnesyl diphosphate from geranyl diphosphate and isopentenyl diphosphate: step 1/1. Its pathway is isoprenoid biosynthesis; geranyl diphosphate biosynthesis; geranyl diphosphate from dimethylallyl diphosphate and isopentenyl diphosphate: step 1/1. It participates in isoprenoid biosynthesis; geranylgeranyl diphosphate biosynthesis; geranylgeranyl diphosphate from farnesyl diphosphate and isopentenyl diphosphate: step 1/1. Functionally, catalyzes the trans-addition of the 3 molecules of IPP onto DMAPP to form geranylgeranyl pyrophosphate. Required for the membrane attachment of YPT1 and SEC4. May be involved in vesicle trafficking and protein sorting. In Saccharomyces cerevisiae (strain ATCC 204508 / S288c) (Baker's yeast), this protein is Geranylgeranyl pyrophosphate synthase BTS1 (BTS1).